A 487-amino-acid chain; its full sequence is Phenylalanine--tRNA ligase alpha subunit (487 aa).

L-phenylalanine contacts are provided by residues threonine 319, glutamine 361–glutamate 363, and tyrosine 401. Mg(2+) is bound at residue glutamate 403. Phenylalanine 427 provides a ligand contact to L-phenylalanine.

It belongs to the class-II aminoacyl-tRNA synthetase family. Phe-tRNA synthetase alpha subunit type 2 subfamily. Tetramer of two alpha and two beta subunits. It depends on Mg(2+) as a cofactor.

The protein localises to the cytoplasm. It catalyses the reaction tRNA(Phe) + L-phenylalanine + ATP = L-phenylalanyl-tRNA(Phe) + AMP + diphosphate + H(+). This chain is Phenylalanine--tRNA ligase alpha subunit (phesA), found in Dictyostelium discoideum (Social amoeba).